A 291-amino-acid polypeptide reads, in one-letter code: Small ribosomal subunit protein uS2 (291 aa).

The tract at residues alanine 255–tryptophan 291 is disordered.

This sequence belongs to the universal ribosomal protein uS2 family. As to quaternary structure, component of the small ribosomal subunit. Mature ribosomes consist of a small (40S) and a large (60S) subunit. The 40S subunit contains about 33 different proteins and 1 molecule of RNA (18S). The 60S subunit contains about 49 different proteins and 3 molecules of RNA (25S, 5.8S and 5S). Interacts with RPS21.

Its subcellular location is the cytoplasm. Functionally, required for the assembly and/or stability of the 40S ribosomal subunit. Required for the processing of the 20S rRNA-precursor to mature 18S rRNA in a late step of the maturation of 40S ribosomal subunits. The chain is Small ribosomal subunit protein uS2 from Podospora anserina (strain S / ATCC MYA-4624 / DSM 980 / FGSC 10383) (Pleurage anserina).